The following is a 391-amino-acid chain: MNVHEYQAKQIFAEYGVPTPKGIMAESVDAAVEAAKELGGPIWVVKAQIHAGGRGLGGGVKLAKSLDEVRELADEILGMTLVTHQTGPEGKLVQKLYIEDGADIKDEFYLSVILDRKLEMPLIMASTEGGMNIEDVAENTPEKIITVPVDPTIGFQGFHGRELAFGLGITDKAEQKNIITFAQKLYKLYMDKDAEMIEINPLVRTGSGEFLALDGKMGFDNSALYRQPEIAAMRDLSEEDPDEVEAAKYGLSYVALDGEIGCMVNGAGLAMGTMDTINHMGGTPANFLDVGGSANAETVAKGFEIILKNPNVKAIFVNIFGGIVRCDRIANGIIEATKITDVHVPVIVRLDGTNAPEAAEILKNANISNLIVAEDLGDGAAKAVAAAKGEI.

Residues Lys9 to Glu245 enclose the ATP-grasp domain. Residues Lys46, Gly53 to Gly55, Glu99, Ala102, and Glu107 each bind ATP. 2 residues coordinate Mg(2+): Asn200 and Asp214. Residues Asn265 and Gly322–Val324 contribute to the substrate site.

Belongs to the succinate/malate CoA ligase beta subunit family. In terms of assembly, heterotetramer of two alpha and two beta subunits. Requires Mg(2+) as cofactor.

The enzyme catalyses succinate + ATP + CoA = succinyl-CoA + ADP + phosphate. It carries out the reaction GTP + succinate + CoA = succinyl-CoA + GDP + phosphate. It functions in the pathway carbohydrate metabolism; tricarboxylic acid cycle; succinate from succinyl-CoA (ligase route): step 1/1. Functionally, succinyl-CoA synthetase functions in the citric acid cycle (TCA), coupling the hydrolysis of succinyl-CoA to the synthesis of either ATP or GTP and thus represents the only step of substrate-level phosphorylation in the TCA. The beta subunit provides nucleotide specificity of the enzyme and binds the substrate succinate, while the binding sites for coenzyme A and phosphate are found in the alpha subunit. This Sulfurovum sp. (strain NBC37-1) protein is Succinate--CoA ligase [ADP-forming] subunit beta.